A 617-amino-acid chain; its full sequence is Bifunctional TH2 protein, mitochondrial (617 aa).

A mitochondrion-targeting transit peptide spans 1 to 28 (MRFLFPTRLINNSSLGLLRSPHTTAPIR). A substrate-binding site is contributed by Asp-107. Cys-213 serves as the catalytic Nucleophile. Substrate-binding residues include Tyr-217 and Tyr-244. The Proton donor role is filled by Glu-286.

In the N-terminal section; belongs to the TenA family. The protein in the C-terminal section; belongs to the HAD-like hydrolase superfamily.

The protein resides in the mitochondrion. It localises to the cytoplasm. It carries out the reaction thiamine phosphate + H2O = thiamine + phosphate. It catalyses the reaction 4-amino-5-aminomethyl-2-methylpyrimidine + H2O = 4-amino-5-hydroxymethyl-2-methylpyrimidine + NH4(+). Its function is as follows. May be involved in the salvage of thiamine breakdown products. This protein has a haloacid dehalogenase family domain fused to its TenA domain. Phosphatase with the highest activity against thiamine monophosphate (ThMP) and, with a lower activity, against thiamine diphosphate (ThDP), flavin mononucleotide, inorganic pyrophosphate, CTP and dATP. Has a thiamine salvage hydrolase activity, but only against 4-amino-5-aminomethyl-2-methylpyrimidine (amino-HMP) and not against N-formylamino-HMP, desthiothiamine, thiamine, ThMP, and ThDP. In Arabidopsis thaliana (Mouse-ear cress), this protein is Bifunctional TH2 protein, mitochondrial.